Here is an 871-residue protein sequence, read N- to C-terminus: Ubiquitin carboxyl-terminal hydrolase 8 (871 aa).

The DUSP domain occupies threonine 4–glycine 99. Residues threonine 279–leucine 869 form the USP domain. Catalysis depends on cysteine 288, which acts as the Nucleophile. Residues glutamate 615–glutamate 650 form a disordered region. Residue histidine 828 is the Proton acceptor of the active site.

It belongs to the peptidase C19 family.

The enzyme catalyses Thiol-dependent hydrolysis of ester, thioester, amide, peptide and isopeptide bonds formed by the C-terminal Gly of ubiquitin (a 76-residue protein attached to proteins as an intracellular targeting signal).. Its function is as follows. Recognizes and hydrolyzes the peptide bond at the C-terminal Gly of ubiquitin. Involved in the processing of poly-ubiquitin precursors as well as that of ubiquitinated proteins. In Arabidopsis thaliana (Mouse-ear cress), this protein is Ubiquitin carboxyl-terminal hydrolase 8 (UBP8).